Consider the following 194-residue polypeptide: ATP-dependent Clp protease proteolytic subunit (194 aa).

The Nucleophile role is filled by Ser-98. Residue His-123 is part of the active site.

It belongs to the peptidase S14 family. As to quaternary structure, fourteen ClpP subunits assemble into 2 heptameric rings which stack back to back to give a disk-like structure with a central cavity, resembling the structure of eukaryotic proteasomes.

The protein resides in the cytoplasm. The catalysed reaction is Hydrolysis of proteins to small peptides in the presence of ATP and magnesium. alpha-casein is the usual test substrate. In the absence of ATP, only oligopeptides shorter than five residues are hydrolyzed (such as succinyl-Leu-Tyr-|-NHMec, and Leu-Tyr-Leu-|-Tyr-Trp, in which cleavage of the -Tyr-|-Leu- and -Tyr-|-Trp bonds also occurs).. Its function is as follows. Cleaves peptides in various proteins in a process that requires ATP hydrolysis. Has a chymotrypsin-like activity. Plays a major role in the degradation of misfolded proteins. This is ATP-dependent Clp protease proteolytic subunit from Clostridium kluyveri (strain NBRC 12016).